Consider the following 584-residue polypeptide: 2-succinyl-5-enolpyruvyl-6-hydroxy-3-cyclohexene-1-carboxylate synthase (584 aa).

The tract at residues 563-584 is disordered; that stretch reads TDAEASHRERERLADRVTGLSV. Residues 566–577 are compositionally biased toward basic and acidic residues; it reads EASHRERERLAD.

It belongs to the TPP enzyme family. MenD subfamily. In terms of assembly, homodimer. Requires Mg(2+) as cofactor. Mn(2+) is required as a cofactor. The cofactor is thiamine diphosphate.

It carries out the reaction isochorismate + 2-oxoglutarate + H(+) = 5-enolpyruvoyl-6-hydroxy-2-succinyl-cyclohex-3-ene-1-carboxylate + CO2. It participates in quinol/quinone metabolism; 1,4-dihydroxy-2-naphthoate biosynthesis; 1,4-dihydroxy-2-naphthoate from chorismate: step 2/7. The protein operates within quinol/quinone metabolism; menaquinone biosynthesis. Functionally, catalyzes the thiamine diphosphate-dependent decarboxylation of 2-oxoglutarate and the subsequent addition of the resulting succinic semialdehyde-thiamine pyrophosphate anion to isochorismate to yield 2-succinyl-5-enolpyruvyl-6-hydroxy-3-cyclohexene-1-carboxylate (SEPHCHC). The polypeptide is 2-succinyl-5-enolpyruvyl-6-hydroxy-3-cyclohexene-1-carboxylate synthase (Halobacterium salinarum (strain ATCC 29341 / DSM 671 / R1)).